The following is a 354-amino-acid chain: Uroporphyrinogen decarboxylase (354 aa).

Substrate contacts are provided by residues 27-31, phenylalanine 46, aspartate 77, tyrosine 154, serine 209, and histidine 327; that span reads RQAGR.

This sequence belongs to the uroporphyrinogen decarboxylase family. Homodimer.

The protein resides in the cytoplasm. The enzyme catalyses uroporphyrinogen III + 4 H(+) = coproporphyrinogen III + 4 CO2. The protein operates within porphyrin-containing compound metabolism; protoporphyrin-IX biosynthesis; coproporphyrinogen-III from 5-aminolevulinate: step 4/4. Catalyzes the decarboxylation of four acetate groups of uroporphyrinogen-III to yield coproporphyrinogen-III. This Pseudomonas syringae pv. tomato (strain ATCC BAA-871 / DC3000) protein is Uroporphyrinogen decarboxylase.